Consider the following 379-residue polypeptide: Epoxyqueuosine reductase (379 aa).

Asp139 serves as the catalytic Proton donor. A 4Fe-4S ferredoxin-type domain is found at 181-213; the sequence is IPLPVDQPVEEGCGKCVACMTICPTGAIVEPYT. The [4Fe-4S] cluster site is built by Cys193, Cys196, Cys199, Cys203, Cys219, Cys246, Cys249, and Cys253.

Belongs to the QueG family. In terms of assembly, monomer. The cofactor is cob(II)alamin. Requires [4Fe-4S] cluster as cofactor.

The protein resides in the cytoplasm. The catalysed reaction is epoxyqueuosine(34) in tRNA + AH2 = queuosine(34) in tRNA + A + H2O. Its pathway is tRNA modification; tRNA-queuosine biosynthesis. Its function is as follows. Catalyzes the conversion of epoxyqueuosine (oQ) to queuosine (Q), which is a hypermodified base found in the wobble positions of tRNA(Asp), tRNA(Asn), tRNA(His) and tRNA(Tyr). The polypeptide is Epoxyqueuosine reductase (Escherichia coli (strain K12)).